The primary structure comprises 425 residues: Serine--tRNA ligase (425 aa).

230 to 232 is an L-serine binding site; that stretch reads TAE. 261–263 contributes to the ATP binding site; sequence RSE. Position 284 (E284) interacts with L-serine. Residue 348–351 coordinates ATP; sequence EISS. S383 provides a ligand contact to L-serine.

The protein belongs to the class-II aminoacyl-tRNA synthetase family. Type-1 seryl-tRNA synthetase subfamily. Homodimer. The tRNA molecule binds across the dimer.

The protein localises to the cytoplasm. The catalysed reaction is tRNA(Ser) + L-serine + ATP = L-seryl-tRNA(Ser) + AMP + diphosphate + H(+). It catalyses the reaction tRNA(Sec) + L-serine + ATP = L-seryl-tRNA(Sec) + AMP + diphosphate + H(+). It participates in aminoacyl-tRNA biosynthesis; selenocysteinyl-tRNA(Sec) biosynthesis; L-seryl-tRNA(Sec) from L-serine and tRNA(Sec): step 1/1. Its function is as follows. Catalyzes the attachment of serine to tRNA(Ser). Is also able to aminoacylate tRNA(Sec) with serine, to form the misacylated tRNA L-seryl-tRNA(Sec), which will be further converted into selenocysteinyl-tRNA(Sec). The sequence is that of Serine--tRNA ligase from Ligilactobacillus salivarius (strain UCC118) (Lactobacillus salivarius).